Here is a 529-residue protein sequence, read N- to C-terminus: uncharacterized protein (529 aa).

Catalysis depends on D389, which acts as the Nucleophile. E392 is an active-site residue. D459 acts as the Proton donor in catalysis.

The protein belongs to the glycosyl hydrolase 31 family.

This is an uncharacterized protein from Pseudescherichia vulneris (Escherichia vulneris).